Reading from the N-terminus, the 193-residue chain is Holliday junction branch migration complex subunit RuvA (193 aa).

A domain I region spans residues 1-64 (MIGRIAGVLL…EDAHLLYGFG (64 aa)). The segment at 65–139 (TAEERSTFRE…GKIGADLGAM (75 aa)) is domain II. The interval 139 to 143 (MAGAA) is flexible linker. The interval 144-193 (SASDHASDILNALLALGYSEKEALAAVKNVPAGTGVSEGIKLALKALSKG) is domain III.

It belongs to the RuvA family. Homotetramer. Forms an RuvA(8)-RuvB(12)-Holliday junction (HJ) complex. HJ DNA is sandwiched between 2 RuvA tetramers; dsDNA enters through RuvA and exits via RuvB. An RuvB hexamer assembles on each DNA strand where it exits the tetramer. Each RuvB hexamer is contacted by two RuvA subunits (via domain III) on 2 adjacent RuvB subunits; this complex drives branch migration. In the full resolvosome a probable DNA-RuvA(4)-RuvB(12)-RuvC(2) complex forms which resolves the HJ.

The protein localises to the cytoplasm. Functionally, the RuvA-RuvB-RuvC complex processes Holliday junction (HJ) DNA during genetic recombination and DNA repair, while the RuvA-RuvB complex plays an important role in the rescue of blocked DNA replication forks via replication fork reversal (RFR). RuvA specifically binds to HJ cruciform DNA, conferring on it an open structure. The RuvB hexamer acts as an ATP-dependent pump, pulling dsDNA into and through the RuvAB complex. HJ branch migration allows RuvC to scan DNA until it finds its consensus sequence, where it cleaves and resolves the cruciform DNA. The polypeptide is Holliday junction branch migration complex subunit RuvA (Paraburkholderia xenovorans (strain LB400)).